The primary structure comprises 546 residues: CTP synthase (546 aa).

Residues 1–266 are amidoligase domain; the sequence is MTKYIFVTGG…GDYLVERLGL (266 aa). Serine 13 provides a ligand contact to CTP. Serine 13 lines the UTP pocket. 14 to 19 contributes to the ATP binding site; it reads SVGKGI. Tyrosine 54 lines the L-glutamine pocket. Residue aspartate 71 participates in ATP binding. Residues aspartate 71 and glutamate 141 each contribute to the Mg(2+) site. Residues 148–150, 187–192, and lysine 223 each bind CTP; these read DIE and KTKPTQ. UTP is bound by residues 187–192 and lysine 223; that span reads KTKPTQ. The 243-residue stretch at 291 to 533 folds into the Glutamine amidotransferase type-1 domain; sequence PIALVGKYVE…VAAAAQTLLA (243 aa). Glycine 353 serves as a coordination point for L-glutamine. Cysteine 380 acts as the Nucleophile; for glutamine hydrolysis in catalysis. L-glutamine contacts are provided by residues 381–384, glutamate 404, and arginine 461; that span reads LGMQ. Catalysis depends on residues histidine 506 and glutamate 508.

The protein belongs to the CTP synthase family. In terms of assembly, homotetramer.

The catalysed reaction is UTP + L-glutamine + ATP + H2O = CTP + L-glutamate + ADP + phosphate + 2 H(+). The enzyme catalyses L-glutamine + H2O = L-glutamate + NH4(+). It catalyses the reaction UTP + NH4(+) + ATP = CTP + ADP + phosphate + 2 H(+). Its pathway is pyrimidine metabolism; CTP biosynthesis via de novo pathway; CTP from UDP: step 2/2. Allosterically activated by GTP, when glutamine is the substrate; GTP has no effect on the reaction when ammonia is the substrate. The allosteric effector GTP functions by stabilizing the protein conformation that binds the tetrahedral intermediate(s) formed during glutamine hydrolysis. Inhibited by the product CTP, via allosteric rather than competitive inhibition. Functionally, catalyzes the ATP-dependent amination of UTP to CTP with either L-glutamine or ammonia as the source of nitrogen. Regulates intracellular CTP levels through interactions with the four ribonucleotide triphosphates. This Chloroflexus aurantiacus (strain ATCC 29366 / DSM 635 / J-10-fl) protein is CTP synthase.